The sequence spans 221 residues: Iron-sulfur cluster repair protein YtfE (221 aa).

It belongs to the RIC family. YtfE subfamily. Homodimer.

It is found in the cytoplasm. Its function is as follows. Di-iron-containing protein involved in the repair of iron-sulfur clusters damaged by oxidative and nitrosative stress conditions. This chain is Iron-sulfur cluster repair protein YtfE, found in Yersinia pestis bv. Antiqua (strain Antiqua).